The following is a 439-amino-acid chain: CBL-interacting serine/threonine-protein kinase 26 (439 aa).

The Protein kinase domain maps to 13 to 268; the sequence is YEVGKTLGQG…IPEVLGDAWF (256 aa). Residues 19–27 and Lys42 contribute to the ATP site; that span reads LGQGTFAKV. Asp136 (proton acceptor) is an active-site residue. The interval 154 to 183 is activation loop; it reads DFGLSALSRQVRGDGLLHTACGTPNYAAPE. Ser158 carries the post-translational modification Phosphoserine. Thr172 is modified (phosphothreonine). Positions 306 to 330 constitute an NAF domain; it reads EQPTSMNAFELISMSRALDLGNLFE. The interval 336-365 is PPI; sequence KRETRFAAKGAANDLVQKIEEASKPLGFDI.

It belongs to the protein kinase superfamily. CAMK Ser/Thr protein kinase family. SNF1 subfamily. Interacts with RBOHF (via N-terminus). The cofactor is Mn(2+).

It is found in the cell membrane. The catalysed reaction is L-seryl-[protein] + ATP = O-phospho-L-seryl-[protein] + ADP + H(+). It catalyses the reaction L-threonyl-[protein] + ATP = O-phospho-L-threonyl-[protein] + ADP + H(+). Functionally, CIPK serine-threonine protein kinases interact with CBL proteins. Binding of a CBL protein to the regulatory NAF domain of CIPK protein lead to the activation of the kinase in a calcium-dependent manner. Involved in the calcium-dependent regulation of reactive oxygen species production by the NADPH oxidase RBOHF. This is CBL-interacting serine/threonine-protein kinase 26 (CIPK26) from Arabidopsis thaliana (Mouse-ear cress).